The primary structure comprises 1651 residues: Vitellogenin-6 (1651 aa).

A signal peptide spans 1–15 (MKFFIALALLGAALA). A Vitellogenin domain is found at 34 to 716 (FRAGREYRYL…TTESVLPTEM (683 aa)). 2 N-linked (GlcNAc...) asparagine glycosylation sites follow: Asn252 and Asn1288. Positions 1340 to 1515 (ANCVVKSTKI…SYLYKDSKCN (176 aa)) constitute a VWFD domain. 2 disulfides stabilise this stretch: Cys1342/Cys1479 and Cys1364/Cys1514. The segment at 1527-1556 (FQRIEKNQEEEKDQEMNYEESRREQDDEPT) is disordered.

As to expression, synthesized in Caenorhabditis only by 32 cells building the intestine of adult hermaphroditic individuals; they are cotranslationally secreted into the body cavity and subsequently taken up by the gonad.

It is found in the secreted. Precursor of the egg-yolk proteins that are sources of nutrients during embryonic development. May play a role in cholesterol uptake. May be involved in thermotolerance. The polypeptide is Vitellogenin-6 (vit-6) (Caenorhabditis elegans).